The primary structure comprises 425 residues: Histone-binding protein RBBP7 (425 aa).

A2 carries the post-translational modification N-acetylalanine. Position 3 is a phosphoserine (S3). Residue K4 is modified to N6-acetyllysine; alternate. K4 participates in a covalent cross-link: Glycyl lysine isopeptide (Lys-Gly) (interchain with G-Cter in SUMO2); alternate. K4 is covalently cross-linked (Glycyl lysine isopeptide (Lys-Gly) (interchain with G-Cter in ubiquitin); alternate). T10 bears the Phosphothreonine mark. WD repeat units follow at residues 47–122 (QWLP…KINH), 128–173 (RARY…LRLR), 181–217 (GLSW…KIVD), 228–269 (VVED…HLVD), 275–312 (VNCL…LHTF), 318–369 (EIFQ…LFIH), and 376–403 (ISDF…IWQM). S95 carries the post-translational modification Phosphoserine. Residue K101 forms a Glycyl lysine isopeptide (Lys-Gly) (interchain with G-Cter in SUMO2) linkage. K119 carries the N6-acetyllysine modification. K155 participates in a covalent cross-link: Glycyl lysine isopeptide (Lys-Gly) (interchain with G-Cter in SUMO2). K159 is subject to N6-acetyllysine; alternate. Residue K159 forms a Glycyl lysine isopeptide (Lys-Gly) (interchain with G-Cter in SUMO2); alternate linkage. At S354 the chain carries Phosphoserine.

This sequence belongs to the WD repeat RBAP46/RBAP48/MSI1 family. Binds directly to helix 1 of the histone fold of histone H4, a region that is not accessible when H4 is in chromatin. Subunit of the type B histone acetyltransferase (HAT) complex, composed of RBBP7 and HAT1. Subunit of the core histone deacetylase (HDAC) complex, which is composed of HDAC1, HDAC2, RBBP4 and RBBP7. The core HDAC complex associates with SIN3A, ARID4B/SAP180, SAP18, SAP30, SAP130, SUDS3/SAP45 and possibly ARID4A/RBP1 and ING1 to form the SIN3 HDAC complex. Component of the nucleosome remodeling and deacetylase (NuRD) repressor complex, composed of core proteins MTA1, MTA2, MTA3, RBBP4, RBBP7, HDAC1, HDAC2, MBD2, MBD3, and peripherally associated proteins CDK2AP1, CDK2AP2, GATAD2A, GATAD2B, CHD3, CHD4 and CHD5. The exact stoichiometry of the NuRD complex is unknown, and some subunits such as MBD2 and MBD3, GATAD2A and GATAD2B, and CHD3, CHD4 and CHD5 define mutually exclusive NuRD complexes. The NuRD complex may interact with MBD3L1. The NuRD complex may interact with MBD3L2. Subunit of the PRC2/EED-EZH2 complex, which is composed of at least EED, EZH2, RBBP4, RBBP7 and SUZ12. The PRC2/EED-EZH2 complex may also associate with HDAC1. Component of the NURF-1 ISWI chromatin remodeling complex (also called the nucleosome-remodeling factor (NURF) complex) at least composed of SMARCA1, BPTF, RBBP4 and RBBP7. Within the complex interacts with SMARCA1. Component of the BPFT-SMARCA1 complex at least composed of SMARCA1, BPFT, RBBP4 and RBBP7; the complex is catalytically inactive and does not remodel chromatin. Within the complex interacts with SMARCA1. Interacts with BRCA1. Interacts with CDK2AP1. Interacts with CENPA. Interacts with CHD3. Interacts with CHD4. Interacts with CREBBP, and this interaction may be enhanced by the binding of phosphorylated CREB1 to CREBBP. Interacts with HDAC7. Interacts with MTA1. Interacts with PWWP2B. Interacts with RB1 (via viral protein-binding domain). Interacts with SUV39H1.

It is found in the nucleus. In terms of biological role, core histone-binding subunit that may target chromatin remodeling factors, histone acetyltransferases and histone deacetylases to their histone substrates in a manner that is regulated by nucleosomal DNA. Component of several complexes which regulate chromatin metabolism. These include the type B histone acetyltransferase (HAT) complex, which is required for chromatin assembly following DNA replication; the core histone deacetylase (HDAC) complex, which promotes histone deacetylation and consequent transcriptional repression; the nucleosome remodeling and histone deacetylase complex (the NuRD complex), which promotes transcriptional repression by histone deacetylation and nucleosome remodeling; and the PRC2/EED-EZH2 complex, which promotes repression of homeotic genes during development; and the NURF (nucleosome remodeling factor) complex. The protein is Histone-binding protein RBBP7 (RBBP7) of Bos taurus (Bovine).